The sequence spans 139 residues: Acid shock protein (139 aa).

The signal sequence occupies residues 1–21 (MKKVLALVVAAAMGLSSAAFA). Residues 22–80 (ADAVSTTQAPAATHSTAAKTTHHKKHHKAAAKPAAEQKAQAAKKHKKAEAKPAAAQKAQ) constitute a propeptide that is removed on maturation. Positions 27-40 (TTQAPAATHSTAAK) are enriched in low complexity. The tract at residues 27 to 139 (TTQAPAATHS…AAKPTAQPAA (113 aa)) is disordered. Residues 41-51 (TTHHKKHHKAA) are compositionally biased toward basic residues. Low complexity-rich tracts occupy residues 52–61 (AKPAAEQKAQ) and 90–99 (AKPAAPQKAQ). The segment covering 118–130 (AAKKHHKTTKHQA) has biased composition (basic residues).

This sequence belongs to the Asr family. Proteolytic processing gives rise to the active protein.

It is found in the periplasm. In terms of biological role, required for growth and/or survival at acidic conditions. This Klebsiella pneumoniae protein is Acid shock protein (asr).